Here is a 313-residue protein sequence, read N- to C-terminus: 4-diphosphocytidyl-2-C-methyl-D-erythritol kinase (313 aa).

Lys-10 is an active-site residue. 95–105 contacts ATP; the sequence is PVTAGLGGGSS. Asp-136 is an active-site residue. A disordered region spans residues 289–313; it reads HPRVSPWRSPRSASSPSTRRSSRPT. The span at 292–307 shows a compositional bias: low complexity; the sequence is VSPWRSPRSASSPSTR.

It belongs to the GHMP kinase family. IspE subfamily.

The catalysed reaction is 4-CDP-2-C-methyl-D-erythritol + ATP = 4-CDP-2-C-methyl-D-erythritol 2-phosphate + ADP + H(+). It participates in isoprenoid biosynthesis; isopentenyl diphosphate biosynthesis via DXP pathway; isopentenyl diphosphate from 1-deoxy-D-xylulose 5-phosphate: step 3/6. Its function is as follows. Catalyzes the phosphorylation of the position 2 hydroxy group of 4-diphosphocytidyl-2C-methyl-D-erythritol. This Anaeromyxobacter dehalogenans (strain 2CP-C) protein is 4-diphosphocytidyl-2-C-methyl-D-erythritol kinase.